Consider the following 151-residue polypeptide: Small ribosomal subunit protein bS6 (151 aa).

Residues 97-151 (EAEPSAMMQKRDRDDRKDRDRGDRPRRRDDDFGGGDRGDRGDRGDRPERNFGGEN) form a disordered region. Residues 105-151 (QKRDRDDRKDRDRGDRPRRRDDDFGGGDRGDRGDRGDRPERNFGGEN) are compositionally biased toward basic and acidic residues.

This sequence belongs to the bacterial ribosomal protein bS6 family.

Binds together with bS18 to 16S ribosomal RNA. This is Small ribosomal subunit protein bS6 from Methylorubrum populi (strain ATCC BAA-705 / NCIMB 13946 / BJ001) (Methylobacterium populi).